A 186-amino-acid polypeptide reads, in one-letter code: Photosystem I assembly protein Ycf4 (186 aa).

A run of 2 helical transmembrane segments spans residues 22–42 and 57–77; these read FCWA…GTSS and IIFF…LFIS.

It belongs to the Ycf4 family.

The protein localises to the plastid. It is found in the chloroplast thylakoid membrane. In terms of biological role, seems to be required for the assembly of the photosystem I complex. In Vitis vinifera (Grape), this protein is Photosystem I assembly protein Ycf4.